We begin with the raw amino-acid sequence, 153 residues long: Cytochrome c-type biogenesis protein CcmE (153 aa).

The Cytoplasmic portion of the chain corresponds to 1–8; sequence MMTPRQRR. Residues 9-29 traverse the membrane as a helical; Signal-anchor for type II membrane protein segment; sequence MTWVALMVAGVSLAAFFALTA. The Periplasmic portion of the chain corresponds to 30–153; it reads FQKNLLYFYT…PADYSEYRKK (124 aa). 2 residues coordinate heme: His-124 and Tyr-128. A disordered region spans residues 134-153; that stretch reads AESLKKNGGLPADYSEYRKK.

Belongs to the CcmE/CycJ family.

It localises to the cell inner membrane. In terms of biological role, heme chaperone required for the biogenesis of c-type cytochromes. Transiently binds heme delivered by CcmC and transfers the heme to apo-cytochromes in a process facilitated by CcmF and CcmH. In Methylococcus capsulatus (strain ATCC 33009 / NCIMB 11132 / Bath), this protein is Cytochrome c-type biogenesis protein CcmE.